The sequence spans 129 residues: Glycine cleavage system H protein (129 aa).

The 83-residue stretch at 24-106 folds into the Lipoyl-binding domain; the sequence is IAVIGITAYA…YGDGWLIKVR (83 aa). An N6-lipoyllysine modification is found at Lys65.

It belongs to the GcvH family. The glycine cleavage system is composed of four proteins: P, T, L and H. Requires (R)-lipoate as cofactor.

The glycine cleavage system catalyzes the degradation of glycine. The H protein shuttles the methylamine group of glycine from the P protein to the T protein. In Synechococcus sp. (strain JA-2-3B'a(2-13)) (Cyanobacteria bacterium Yellowstone B-Prime), this protein is Glycine cleavage system H protein.